We begin with the raw amino-acid sequence, 151 residues long: Ribosome maturation factor RimP (151 aa).

Belongs to the RimP family.

The protein resides in the cytoplasm. Required for maturation of 30S ribosomal subunits. The polypeptide is Ribosome maturation factor RimP (Pseudoalteromonas translucida (strain TAC 125)).